The following is a 178-amino-acid chain: MQDIVILRLGHRPERDARVTTHVGLTARALGAKGMLLTTDDKSVAESIQRVAAAWGGDFWVRAGVSYRSEIRQWKEKGGFVVHLTMYGINLPGCLEQIQEQFKGRGVMIIVGAEKVPGDIYGLADYNVAVGNQPHSEIAALALFMDKLQEGKSLMHEFKGGELKIIPSEHGKSVVKNR.

Residues leucine 84, 112 to 116 (GAEKV), and 130 to 137 (VGNQPHSE) contribute to the S-adenosyl-L-methionine site.

This sequence belongs to the aTrm56 family. In terms of assembly, homodimer.

It is found in the cytoplasm. It catalyses the reaction cytidine(56) in tRNA + S-adenosyl-L-methionine = 2'-O-methylcytidine(56) in tRNA + S-adenosyl-L-homocysteine + H(+). Its function is as follows. Specifically catalyzes the AdoMet-dependent 2'-O-ribose methylation of cytidine at position 56 in tRNAs. The chain is tRNA (cytidine(56)-2'-O)-methyltransferase from Methanocella arvoryzae (strain DSM 22066 / NBRC 105507 / MRE50).